Consider the following 89-residue polypeptide: Small ribosomal subunit protein uS15 (89 aa).

Belongs to the universal ribosomal protein uS15 family. Part of the 30S ribosomal subunit. Forms a bridge to the 50S subunit in the 70S ribosome, contacting the 23S rRNA.

One of the primary rRNA binding proteins, it binds directly to 16S rRNA where it helps nucleate assembly of the platform of the 30S subunit by binding and bridging several RNA helices of the 16S rRNA. In terms of biological role, forms an intersubunit bridge (bridge B4) with the 23S rRNA of the 50S subunit in the ribosome. This chain is Small ribosomal subunit protein uS15, found in Nitrosomonas eutropha (strain DSM 101675 / C91 / Nm57).